Reading from the N-terminus, the 546-residue chain is Chaperonin GroEL (546 aa).

ATP-binding positions include 29-32 (TMGP), Lys50, 86-90 (DGTTT), Gly412, 476-478 (NAA), and Asp492.

The protein belongs to the chaperonin (HSP60) family. As to quaternary structure, forms a cylinder of 14 subunits composed of two heptameric rings stacked back-to-back. Interacts with the co-chaperonin GroES.

It localises to the cytoplasm. The catalysed reaction is ATP + H2O + a folded polypeptide = ADP + phosphate + an unfolded polypeptide.. Its function is as follows. Together with its co-chaperonin GroES, plays an essential role in assisting protein folding. The GroEL-GroES system forms a nano-cage that allows encapsulation of the non-native substrate proteins and provides a physical environment optimized to promote and accelerate protein folding. May play a protective role against the defense mechanisms generated by the infected macrophages. This Legionella micdadei (Tatlockia micdadei) protein is Chaperonin GroEL.